The primary structure comprises 357 residues: Protein pelota homolog (357 aa).

Belongs to the eukaryotic release factor 1 family. Pelota subfamily. Monomer. The cofactor is a divalent metal cation.

It is found in the cytoplasm. Functionally, may function in recognizing stalled ribosomes, interact with stem-loop structures in stalled mRNA molecules, and effect endonucleolytic cleavage of the mRNA. May play a role in the release non-functional ribosomes and degradation of damaged mRNAs. Has endoribonuclease activity. In Thermococcus kodakarensis (strain ATCC BAA-918 / JCM 12380 / KOD1) (Pyrococcus kodakaraensis (strain KOD1)), this protein is Protein pelota homolog.